Consider the following 201-residue polypeptide: Syndecan-2 (201 aa).

The first 18 residues, 1–18 (MQRAWILLTLGLMACVSA), serve as a signal peptide directing secretion. At 19–144 (ETRAELTSDK…HSDNLFKRTE (126 aa)) the chain is on the extracellular side. Ser41, Ser55, and Ser57 each carry an O-linked (Xyl...) (glycosaminoglycan) serine glycan. Disordered regions lie at residues 42–69 (GLYP…PDLT) and 88–129 (TMTL…KSTD). Over residues 90 to 102 (TLKTQSITPTQTE) the composition is skewed to polar residues. Basic and acidic residues predominate over residues 106-123 (ETDKKEFEISEAEEKQDP). Residue Ser115 is modified to Phosphoserine. A helical transmembrane segment spans residues 145–169 (VLAAVIAGGVIGFLFAIFLILLLVY). Topologically, residues 170–201 (RMRKKDEGSYDLGERKPSSAAYQKAPTKEFYA) are cytoplasmic. The tract at residues 178 to 201 (SYDLGERKPSSAAYQKAPTKEFYA) is disordered. Ser187 is subject to Phosphoserine.

It belongs to the syndecan proteoglycan family. Interacts (via cytoplasmic domain) with SARM1. Forms a complex with SDCBP and PDCD6IP. In terms of processing, O-glycosylated; contains both heparan sulfate and chondroitin sulfate.

Its subcellular location is the membrane. In terms of biological role, cell surface proteoglycan which regulates dendritic arbor morphogenesis. The chain is Syndecan-2 (Sdc2) from Rattus norvegicus (Rat).